The following is a 368-amino-acid chain: MSTLHSTPRADGFYMPAEWATQTQAWMIWPERPDNWRLGGKPAQAAHAAVAKAIARFEPVTVAVSAAQYENARARLDVPNIRVVEMSSDDAWVRDTGPTFVINASGEVRGVHWGFNAWGGFEGGLYSPWNRDEQVASKVLEIERCQEYRTEGFVLEGGSIHVDGEGTLITTEECLLNHNRNPHLSREEIEAVLREHLAVEQIVWLPDGLYNDETDGHVDNFCCYVRPGEVLLAWTDDPQDPNYPRCQAALQVLENTRDAKGRTFKVHKMPIPGPLYATEEECAGVDAVEGSQERNPSVRLAGSYVNFLIVNGGIIAPSFDDPMDAQAKAILQQLFPEHEVVMVPGRELLLGGGNIHCLTQQQPAPQRI.

Residue Cys357 is the Amidino-cysteine intermediate of the active site.

It belongs to the agmatine deiminase family. Homodimer.

It carries out the reaction agmatine + H2O = N-carbamoylputrescine + NH4(+). Its pathway is amine and polyamine biosynthesis; putrescine biosynthesis via agmatine pathway; N-carbamoylputrescine from agmatine: step 1/1. Its function is as follows. Mediates the hydrolysis of agmatine into N-carbamoylputrescine in the arginine decarboxylase (ADC) pathway of putrescine biosynthesis, a basic polyamine. The protein is Agmatine deiminase of Pseudomonas fluorescens (strain ATCC BAA-477 / NRRL B-23932 / Pf-5).